The sequence spans 327 residues: GMP reductase (327 aa).

The active-site Thioimidate intermediate is cysteine 176. 205-228 is a binding site for NADP(+); the sequence is IIADGGIRTHGDIAKSIRFGASMV.

The protein belongs to the IMPDH/GMPR family. GuaC type 2 subfamily.

It catalyses the reaction IMP + NH4(+) + NADP(+) = GMP + NADPH + 2 H(+). In terms of biological role, catalyzes the irreversible NADPH-dependent deamination of GMP to IMP. It functions in the conversion of nucleobase, nucleoside and nucleotide derivatives of G to A nucleotides, and in maintaining the intracellular balance of A and G nucleotides. The protein is GMP reductase of Streptococcus pyogenes serotype M49 (strain NZ131).